A 436-amino-acid chain; its full sequence is UPF0597 protein YhaM (436 aa).

This sequence belongs to the UPF0597 family.

The polypeptide is UPF0597 protein YhaM (Salmonella paratyphi C (strain RKS4594)).